Reading from the N-terminus, the 268-residue chain is Sterol uptake protein 2 (268 aa).

The protein belongs to the SUT1 family.

It localises to the nucleus. Its function is as follows. Putative transcription factor involved in the regulation of the activity of the cAMP/protein kinase A pathway. Involved in sterol uptake. With SUT1, positively regulates mating by repressing the expression of the mating inhibitors NCE102, PRR2 and RHO5 in response to pheromone. The polypeptide is Sterol uptake protein 2 (Saccharomyces cerevisiae (strain ATCC 204508 / S288c) (Baker's yeast)).